Here is an 80-residue protein sequence, read N- to C-terminus: Serine protease inhibitor Kazal-type 6 (80 aa).

A signal peptide spans 1–23 (MKTSGVFLLLSLALFCFFSGVFG). Q24 bears the Pyrrolidone carboxylic acid mark. The region spanning 24 to 80 (QGAQVDCAEFKDPKVYCTRESNPHCGSDGQTYGNKCAFCKAVMKSGGKINLKHRGKC) is the Kazal-like domain. 3 disulfide bridges follow: C30/C62, C40/C59, and C48/C80.

In terms of tissue distribution, seminal plasma.

Its subcellular location is the secreted. Functionally, serine protease inhibitor selective for kallikreins. Efficiently inhibits KLK4, KLK5, KLK6, KLK7, KLK12, KLK13 and KLK14. Doesn't inhibit KLK8. Inhibits acrosin, trypsin, and chymotrypsin. This is Serine protease inhibitor Kazal-type 6 (SPINK6) from Bos taurus (Bovine).